The sequence spans 607 residues: ATP-dependent RNA helicase-like protein DB10 (607 aa).

The span at 1 to 10 (MAVVTASSAG) shows a compositional bias: polar residues. Disordered stretches follow at residues 1-25 (MAVV…KPWK) and 66-108 (VFVS…DGTS). The region spanning 18–52 (PTLPKPWKGLVDGTTGFIYFWNPETNDTQYERPVP) is the WW domain. The span at 89–98 (RGSNNKIARS) shows a compositional bias: polar residues. The segment covering 99–108 (SSDRFHDGTS) has biased composition (basic and acidic residues). Positions 145–173 (TSFEATGFPSEIVREMHQAGFSAPTPIQA) match the Q motif motif. The Helicase ATP-binding domain maps to 176 to 350 (WPIALQGRDI…ADLLVNSVQV (175 aa)). 189–196 (AKTGSGKT) serves as a coordination point for ATP. Residues 298–301 (DEAD) carry the DEAD box motif. The region spanning 379–523 (RVEQILRSKE…CVPTELRDMA (145 aa)) is the Helicase C-terminal domain. Residues 519–607 (LRDMASRGGG…WSGKKSRFTD (89 aa)) form a disordered region. Residues 538 to 548 (SGPGGRGGRGG) are compositionally biased toward gly residues. The segment covering 562–574 (GYDRGSRDSDRYG) has biased composition (basic and acidic residues).

This sequence belongs to the DEAD box helicase family.

It carries out the reaction ATP + H2O = ADP + phosphate + H(+). This Nicotiana sylvestris (Wood tobacco) protein is ATP-dependent RNA helicase-like protein DB10.